The following is a 624-amino-acid chain: Elongation factor 4 (624 aa).

In terms of domain architecture, tr-type G spans 17 to 203; the sequence is ALIRNFCIIA…RVVRDVPAPV (187 aa). Residues 29–34 and 150–153 contribute to the GTP site; these read DHGKST and NKID.

Belongs to the TRAFAC class translation factor GTPase superfamily. Classic translation factor GTPase family. LepA subfamily.

It localises to the cell membrane. The catalysed reaction is GTP + H2O = GDP + phosphate + H(+). Its function is as follows. Required for accurate and efficient protein synthesis under certain stress conditions. May act as a fidelity factor of the translation reaction, by catalyzing a one-codon backward translocation of tRNAs on improperly translocated ribosomes. Back-translocation proceeds from a post-translocation (POST) complex to a pre-translocation (PRE) complex, thus giving elongation factor G a second chance to translocate the tRNAs correctly. Binds to ribosomes in a GTP-dependent manner. This is Elongation factor 4 from Streptomyces griseus subsp. griseus (strain JCM 4626 / CBS 651.72 / NBRC 13350 / KCC S-0626 / ISP 5235).